The following is a 242-amino-acid chain: Glucosamine-6-phosphate deaminase (242 aa).

The Proton acceptor; for enolization step role is filled by D67. N136 acts as the For ring-opening step in catalysis. The active-site Proton acceptor; for ring-opening step is H138. E143 serves as the catalytic For ring-opening step.

The protein belongs to the glucosamine/galactosamine-6-phosphate isomerase family. NagB subfamily.

The catalysed reaction is alpha-D-glucosamine 6-phosphate + H2O = beta-D-fructose 6-phosphate + NH4(+). It participates in amino-sugar metabolism; N-acetylneuraminate degradation; D-fructose 6-phosphate from N-acetylneuraminate: step 5/5. Its function is as follows. Catalyzes the reversible isomerization-deamination of glucosamine 6-phosphate (GlcN6P) to form fructose 6-phosphate (Fru6P) and ammonium ion. In Alkaliphilus metalliredigens (strain QYMF), this protein is Glucosamine-6-phosphate deaminase.